We begin with the raw amino-acid sequence, 457 residues long: Tubulin alpha chain (457 aa).

The GTP site is built by Gln-12, Glu-77, Ser-146, Gly-150, Thr-151, Thr-186, Asn-213, and Asn-235. Glu-77 is a Mg(2+) binding site.

The protein belongs to the tubulin family. As to quaternary structure, dimer of alpha and beta chains. A typical microtubule is a hollow water-filled tube with an outer diameter of 25 nm and an inner diameter of 15 nM. Alpha-beta heterodimers associate head-to-tail to form protofilaments running lengthwise along the microtubule wall with the beta-tubulin subunit facing the microtubule plus end conferring a structural polarity. Microtubules usually have 13 protofilaments but different protofilament numbers can be found in some organisms and specialized cells. Mg(2+) is required as a cofactor. Post-translationally, undergoes a tyrosination/detyrosination cycle, the cyclic removal and re-addition of a C-terminal tyrosine residue by the enzymes tubulin tyrosine carboxypeptidase (TTCP) and tubulin tyrosine ligase (TTL), respectively.

The protein localises to the cytoplasm. Its subcellular location is the cytoskeleton. The enzyme catalyses GTP + H2O = GDP + phosphate + H(+). Its function is as follows. Tubulin is the major constituent of microtubules, a cylinder consisting of laterally associated linear protofilaments composed of alpha- and beta-tubulin heterodimers. Microtubules grow by the addition of GTP-tubulin dimers to the microtubule end, where a stabilizing cap forms. Below the cap, tubulin dimers are in GDP-bound state, owing to GTPase activity of alpha-tubulin. This Dictyostelium discoideum (Social amoeba) protein is Tubulin alpha chain (tubA).